The following is a 492-amino-acid chain: MWLLLPILLYSAVFLSVRHIYSHWRRRGFPSEKAGITWSFLQKAYRREFRHVEAICEAYQSGKDRLLGIYCFFRPVLLVRNVELAQTILQQSNGHFSELKWDYISGYRRFNLLEKLAPMFGTKRLSEMFGQVQKVGDHLIHHLLDRQGQGCPQEVDIQQKLRVYSVNIIANLIYGLDINNFEHEDHILTSYLSHSQASIQSFTLGRLPQKSSYTYRLRDLIKQSVELREDHGLIRKDILQLLVRFRNGNEVSGDKWQLEPINDADKLLSIKRLAKVAEDLLKVSLDAVASTVTFTLLEILQEPLIVEKLRAEIKELSNENGQLKFEELNGLRYMDMCLKETLRKYPPLPIIERVCRKSYSLPNSKFTIDEGKTLMVPLLAMHRDEKYFSEPMKYKPLRFLQTANDVGQCEDKTKSNVFIGFGIGGSQCVGQNFAKLVIKVALIKLLQNFHLELDANQVKTLKVSHRPAPFIHTKDGLKVKLKRREINTKFYS.

Cys428 serves as a coordination point for heme.

It belongs to the cytochrome P450 family. The cofactor is heme.

The protein resides in the endoplasmic reticulum membrane. It localises to the microsome membrane. Its function is as follows. May be involved in the metabolism of insect hormones and in the breakdown of synthetic insecticides. The protein is Probable cytochrome P450 310a1 (Cyp310a1) of Drosophila melanogaster (Fruit fly).